Here is a 69-residue protein sequence, read N- to C-terminus: Small integral membrane protein 20 (69 aa).

At 1–8 (MAAARNLR) the chain is on the mitochondrial matrix side. A helical membrane pass occupies residues 9–29 (TALIFGGFISMVGAAFYPIYF). The Mitochondrial intermembrane segment spans residues 30 to 69 (RPLMRLEEYQKEQAVNRAGIVQEDVQPPGLKVWSDPFGRK). Phenylalanine 66 is modified (phenylalanine amide).

As to quaternary structure, component of the MITRAC (mitochondrial translation regulation assembly intermediate of cytochrome c oxidase complex) complex, the core components of this complex being COA3/MITRAC12 and COX14. Interacts with COA3/MITRAC12 and COX4I1. Directly interacts with newly synthesized MT-CO1/COX1. As to expression, highly expressed in the hypothalamus, the spinal cord, and sensory ganglia (at protein level). Also expressed on in the epidermis and dermis layers of the skin (at protein level). Expressed in preadipocytes and adipocytes (at protein level). Expressed in the ovary, specifically in granulosa cells of follicles that have passed the primary stage and in oocytes (at protein level).

The protein localises to the mitochondrion inner membrane. The protein resides in the secreted. Functionally, component of the MITRAC (mitochondrial translation regulation assembly intermediate of cytochrome c oxidase complex) complex, that regulates cytochrome c oxidase assembly. Promotes the progression of complex assembly after the association of MT-CO1/COX1 with COX4I1 and COX6C. Chaperone-like assembly factor required to stabilize newly synthesized MT-CO1/COX1 and to prevent its premature turnover. Peptide involved in a broad spectrum of regulatory functions. Is a ligand for GPR173. As part of the reproductive cycle, it regulates gonadotropin-releasing hormone (GnRH) signaling in the hypothalamus and pituitary gland which augments the release of luteinizing hormone. More specifically, it regulates the expression of transcription factors CEBPB and POU2F1/OCT1 through the cAMP-PKA signaling pathway, which subsequently regulate the expression of GNRHR and KISS1. Plays a protective role in memory retention through activation of GNRHR. Regulates the secretion of AVP by hypothalamic neurons. Plays a role in the transduction of the itch sensation. Induces anxiolytic effects, reducing behavior associated with anxiety. Regulates food intake as well as satiation and satiety by increasing Nucb2 expression in neurons. In the ovary, it regulates follicular growth by stimulating granulosa cell proliferation by increasing the expression of GPR173, CREB1, CYP19A1, KITLG, FSHR, and LHCGR. It also increases the production of estradiol (E2). In the heart, it regulates contractility and relaxation by activating the AKT1-NOS3 and MAPK1-MAPK3 signaling pathways. It also plays a cardioprotective role during ischemia, where it activates the SAFE and RISK pathways. Stimulates the proliferation and differentiation of preadipocytes. In pancreatic islet cells, it induces proliferation of islet cells as well as the production of INS through activation of the MAPK1-MAPK3 signaling pathways. In Mus musculus (Mouse), this protein is Small integral membrane protein 20.